Here is a 313-residue protein sequence, read N- to C-terminus: Porphobilinogen deaminase (313 aa).

Cys242 carries the S-(dipyrrolylmethanemethyl)cysteine modification.

It belongs to the HMBS family. As to quaternary structure, monomer. Dipyrromethane serves as cofactor.

The enzyme catalyses 4 porphobilinogen + H2O = hydroxymethylbilane + 4 NH4(+). Its pathway is porphyrin-containing compound metabolism; protoporphyrin-IX biosynthesis; coproporphyrinogen-III from 5-aminolevulinate: step 2/4. In terms of biological role, tetrapolymerization of the monopyrrole PBG into the hydroxymethylbilane pre-uroporphyrinogen in several discrete steps. The sequence is that of Porphobilinogen deaminase from Erwinia tasmaniensis (strain DSM 17950 / CFBP 7177 / CIP 109463 / NCPPB 4357 / Et1/99).